The sequence spans 306 residues: tRNA dimethylallyltransferase (306 aa).

12 to 19 (GPTASGKT) lines the ATP pocket. 14 to 19 (TASGKT) provides a ligand contact to substrate. Interaction with substrate tRNA regions lie at residues 37–40 (DSAL), 161–165 (QRLSR), and 242–247 (RCVGYR).

Belongs to the IPP transferase family. In terms of assembly, monomer. Mg(2+) serves as cofactor.

It carries out the reaction adenosine(37) in tRNA + dimethylallyl diphosphate = N(6)-dimethylallyladenosine(37) in tRNA + diphosphate. Functionally, catalyzes the transfer of a dimethylallyl group onto the adenine at position 37 in tRNAs that read codons beginning with uridine, leading to the formation of N6-(dimethylallyl)adenosine (i(6)A). The chain is tRNA dimethylallyltransferase from Shewanella amazonensis (strain ATCC BAA-1098 / SB2B).